We begin with the raw amino-acid sequence, 449 residues long: Zinc finger and BTB domain-containing protein 14 (449 aa).

One can recognise a BTB domain in the interval 36-102 (CDIAIVVEDV…MYTAKISVKK (67 aa)). Residue K46 forms a Glycyl lysine isopeptide (Lys-Gly) (interchain with G-Cter in SUMO2) linkage. Positions 50–66 (HRCVLAACSTYFKKLFK) match the Nuclear localization signal motif. Residues 153–194 (GDAADTQDDDVEEIGDQDDSPSDDTVEGTPPSQEDGKSPTTT) are disordered. Over residues 157–178 (DTQDDDVEEIGDQDDSPSDDTV) the composition is skewed to acidic residues. Glycyl lysine isopeptide (Lys-Gly) (interchain with G-Cter in SUMO2) cross-links involve residues K203 and K249. 5 consecutive C2H2-type zinc fingers follow at residues 277–304 (IACQ…ADRP), 305–332 (FVCE…GYKP), 333–360 (YSCE…NERP), 361–388 (FACH…GEKP), and 389–417 (FVCG…ERKQ).

Belongs to the krueppel C2H2-type zinc-finger protein family. Interacts with ZBTB21.

The protein resides in the nucleus. In terms of biological role, transcriptional activator of the dopamine transporter (DAT), binding it's promoter at the consensus sequence 5'-CCTGCACAGTTCACGGA-3'. Binds to 5'-d(GCC)(n)-3' trinucleotide repeats in promoter regions and acts as a repressor of the FMR1 gene. Transcriptional repressor of MYC and thymidine kinase promoters. The chain is Zinc finger and BTB domain-containing protein 14 (ZBTB14) from Homo sapiens (Human).